A 197-amino-acid polypeptide reads, in one-letter code: MTLLPGLLFLTWLHTCLAHHDPSLRGHPHSHGTPHCYSAEELPLGQAPPHLLARGAKWGQALPVALVSSLEAASHRGRHERPSATTQCPVLRPEEVLEADTHQRSISPWRYRVDTDEDRYPQKLAFAECLCRGCIDARTGRETAALNSVRLLQSLLVLRRRPCSRDGSGLPTPGAFAFHTEFIHVPVGCTCVLPRSV.

The first 18 residues, 1-18, serve as a signal peptide directing secretion; the sequence is MTLLPGLLFLTWLHTCLA. Cystine bridges form between Cys129/Cys189 and Cys134/Cys191.

This sequence belongs to the IL-17 family. In terms of assembly, binds to a heterodimer formed by IL17RA and IL17RE.

It localises to the secreted. Functionally, cytokine that plays a crucial role in innate immunity of the epithelium, including to intestinal bacterial pathogens, in an autocrine manner. Stimulates the production of antibacterial peptides and pro-inflammatory molecules for host defense by signaling through the NF-kappa-B and MAPK pathways. Acts synergically with IL22 in inducing the expression of antibacterial peptides, including S100A8, S100A9, REG3A and REG3G. Synergy is also observed with TNF and IL1B in inducing DEFB2 from keratinocytes. Depending on the type of insult, may have both protective and pathogenic properties, either by maintaining epithelial homeostasis after an inflammatory challenge or by promoting inflammatory phenotype. Enhanced IL17C/IL17RE signaling may also lead to greater susceptibility to autoimmune diseases. This Homo sapiens (Human) protein is Interleukin-17C (IL17C).